The chain runs to 1177 residues: Zinc finger CCCH domain-containing protein 6 (1177 aa).

Basic and acidic residues predominate over residues M1–E12. 2 disordered regions span residues M1–Y137 and Q179–R206. Positions D13–D31 are enriched in acidic residues. The stretch at E27–N73 forms a coiled coil. The segment covering Q32 to Y46 has biased composition (basic and acidic residues). A compositionally biased stretch (basic residues) spans R47 to N73. Low complexity predominate over residues Q179 to K188. C3H1-type zinc fingers lie at residues K271–E297, E299–F326, and P327–L350. A coiled-coil region spans residues H347–G383. Disordered stretches follow at residues G383–D416, P446–Q587, Q622–G654, R670–H767, P780–E826, E942–S988, D1043–G1101, and L1132–L1162. A compositionally biased stretch (low complexity) spans H493–C502. Polar residues-rich tracts occupy residues E512–E522 and S564–Q587. Positions R713 to P728 are enriched in polar residues. Over residues P753 to H767 the composition is skewed to basic and acidic residues. A compositionally biased stretch (basic and acidic residues) spans G955–L967. Polar residues-rich tracts occupy residues L1050 to T1064 and K1077 to A1093. S1150 is modified (phosphoserine).

The chain is Zinc finger CCCH domain-containing protein 6 (Zc3h6) from Mus musculus (Mouse).